The following is a 142-amino-acid chain: uncharacterized protein (142 aa).

2 consecutive transmembrane segments (helical) span residues asparagine 12–leucine 29 and isoleucine 44–alanine 66.

It localises to the cell membrane. This is an uncharacterized protein from Archaeoglobus fulgidus (strain ATCC 49558 / DSM 4304 / JCM 9628 / NBRC 100126 / VC-16).